A 1463-amino-acid chain; its full sequence is Nucleoporin NUP152 (1463 aa).

Disordered regions lie at residues 1-199, 339-568, and 609-1064; these read MDPP…GRPG, GIPD…ELPA, and TTKK…FGNT. 6 stretches are compositionally biased toward polar residues: residues 32-42, 81-92, 144-155, 175-191, 367-378, and 416-472; these read STNSNSVTANA, GPSSKLSQSVSA, TSSKATSFSGAP, TTYTQRVSSHPLTQSFP, PSSSTFTHTASP, and PAKT…SSNI. The span at 481–498 shows a compositional bias: acidic residues; sequence KDEDNESDTGSEAEAEDE. Composition is skewed to low complexity over residues 511–523 and 616–630; these read GASSSAPSEGGES and AAAPAEAPKEATPTT. 3 stretches are compositionally biased toward polar residues: residues 651–664, 673–689, and 720–746; these read IFGSTTNPTETSIP, PATSTTNSLFGATTSAA, and TTESPKTNLFQFGTPNKTETAPATQPQ. One copy of the FXFG 1 repeat lies at 729–732; the sequence is FQFG. Low complexity predominate over residues 753 to 768; that stretch reads KPPSTETPTEKPATTS. Residues 777–789 are compositionally biased toward polar residues; the sequence is PATTSSLFGSATT. A compositionally biased stretch (low complexity) spans 803–813; that stretch reads TTTPADKPTTT. Residues 814–828 show a composition bias toward polar residues; the sequence is NLFGSTSTQATSGSD. Residues 835-838 form an FXFG 2 repeat; it reads FAFG. Residues 840-863 show a composition bias toward polar residues; the sequence is TTESKPTTSLFGSTTPAPATSTEN. Positions 870 to 881 are enriched in low complexity; sequence ATTTSATPATNT. 5 stretches are compositionally biased toward polar residues: residues 900–923, 940–961, 968–987, 998–1029, and 1037–1055; these read GSSTTTAAPVFQFGSTPASTSTEQ, GSTSATSTEQKPLFGSSTTMTE, SISTTATEQKPLFGSTSTTE, STEQKSLFGITPSTTENNPASIFGNSSTSTEQ, and PASTEQKPLFGSTPSTTEN. An FXFG 3 repeat occupies 910-913; the sequence is FQFG. 4 FXFG repeats span residues 1074–1077, 1127–1130, 1141–1144, and 1152–1155; these read FNFG and FTFG. 2 disordered regions span residues 1155–1174 and 1179–1217; these read GASSDSSNASNNASSAPIFS and QPSSTPLFGQNNPPAASNIFASSLAPVGGTSTGTSKHVP. Low complexity predominate over residues 1156–1170; it reads ASSDSSNASNNASSA. The stretch at 1173 to 1176 is one FXFG 8 repeat; that stretch reads FSFG. Polar residues predominate over residues 1179 to 1199; it reads QPSSTPLFGQNNPPAASNIFA. An FXFG 9 repeat occupies 1236–1239; the sequence is FTFG. Over residues 1240–1271 the composition is skewed to low complexity; the sequence is GASSLATTPAASTPEPSAANAAAAGEDQGASA. 2 disordered regions span residues 1240 to 1335 and 1416 to 1463; these read GASS…PWKV and AALE…DEKK. The RanBD1 domain occupies 1289–1427; that stretch reads GEEDESVVHE…LEEHKKANEK (139 aa). Positions 1418–1463 are enriched in basic and acidic residues; that stretch reads LEEHKKANEKKDGEKNEESEKKDEKQEEKKNEEKKDEKEEKKDEKK.

As to quaternary structure, the nuclear pore complex (NPC) constitutes the exclusive means of nucleocytoplasmic transport. NPCs allow the passive diffusion of ions and small molecules and the active, nuclear transport receptor-mediated bidirectional transport of macromolecules such as proteins, RNAs, ribonucleoparticles (RNPs), and ribosomal subunits across the nuclear envelope. The 55-60 MDa NPC is composed of at least 28 different subunits: AMO1, ELYS, GLE1, GLE2, MLP1, NDC1, NIC96, NSP1, NUP133, NUP145, NUP152, NUP159, NUP170, NUP188, NUP192, NUP37, NUP49, NUP53, NUP56, NUP57, NUP82, NUP84, NUP85, POM152, POM33, POM34, SEC13 and SEH1. Due to its 8-fold rotational symmetry, all subunits are present with 8 copies or multiples thereof.

The protein localises to the nucleus. The protein resides in the nuclear pore complex. It is found in the nucleus membrane. Functions as a component of the nuclear pore complex (NPC). NPC components, collectively referred to as nucleoporins (NUPs), can play the role of both NPC structural components and of docking or interaction partners for transiently associated nuclear transport factors. Active directional transport is assured by both, a Phe-Gly (FG) repeat affinity gradient for these transport factors across the NPC and a transport cofactor concentration gradient across the nuclear envelope (GSP1 and GSP2 GTPases associated predominantly with GTP in the nucleus, with GDP in the cytoplasm). In Chaetomium thermophilum (strain DSM 1495 / CBS 144.50 / IMI 039719) (Thermochaetoides thermophila), this protein is Nucleoporin NUP152 (NUP152).